The chain runs to 324 residues: 2,3,4,5-tetrahydropyridine-2,6-dicarboxylate N-succinyltransferase (324 aa).

Mg(2+) is bound by residues Asp173 and Glu190. Catalysis depends on Glu206, which acts as the Acyl-anhydride intermediate. Residues Arg208, Gly223, Ser226, Ala249, Glu264–Ala265, Gly272, Lys284, and Arg297–Ser300 contribute to the succinyl-CoA site.

Belongs to the type 2 tetrahydrodipicolinate N-succinyltransferase family. As to quaternary structure, homotrimer.

It localises to the cytoplasm. It catalyses the reaction (S)-2,3,4,5-tetrahydrodipicolinate + succinyl-CoA + H2O = (S)-2-succinylamino-6-oxoheptanedioate + CoA. It participates in amino-acid biosynthesis; L-lysine biosynthesis via DAP pathway; LL-2,6-diaminopimelate from (S)-tetrahydrodipicolinate (succinylase route): step 1/3. Its function is as follows. Catalyzes the conversion of the cyclic tetrahydrodipicolinate (THDP) into the acyclic N-succinyl-L-2-amino-6-oxopimelate using succinyl-CoA. In Geodermatophilus obscurus (strain ATCC 25078 / DSM 43160 / JCM 3152 / CCUG 61914 / KCC A-0152 / KCTC 9177 / NBRC 13315 / NRRL B-3577 / G-20), this protein is 2,3,4,5-tetrahydropyridine-2,6-dicarboxylate N-succinyltransferase.